The chain runs to 501 residues: Glycerol kinase (501 aa).

Residue threonine 17 coordinates ADP. 3 residues coordinate ATP: threonine 17, threonine 18, and serine 19. Position 17 (threonine 17) interacts with sn-glycerol 3-phosphate. Residue arginine 21 coordinates ADP. 4 residues coordinate sn-glycerol 3-phosphate: arginine 87, glutamate 88, tyrosine 139, and aspartate 243. Positions 87, 88, 139, 243, and 244 each coordinate glycerol. Residues threonine 265 and glycine 308 each coordinate ADP. Threonine 265, glycine 308, glutamine 312, and glycine 409 together coordinate ATP. Residues glycine 409 and asparagine 413 each coordinate ADP.

The protein belongs to the FGGY kinase family.

It carries out the reaction glycerol + ATP = sn-glycerol 3-phosphate + ADP + H(+). Its pathway is polyol metabolism; glycerol degradation via glycerol kinase pathway; sn-glycerol 3-phosphate from glycerol: step 1/1. Its activity is regulated as follows. Inhibited by fructose 1,6-bisphosphate (FBP). Key enzyme in the regulation of glycerol uptake and metabolism. Catalyzes the phosphorylation of glycerol to yield sn-glycerol 3-phosphate. The protein is Glycerol kinase of Pseudomonas syringae pv. tomato (strain ATCC BAA-871 / DC3000).